Consider the following 493-residue polypeptide: Calcium-binding tyrosine phosphorylation-regulated protein (493 aa).

In terms of domain architecture, RIIa spans 12 to 49 (YGLKTLLEGISRAVLKTNPSNINQFAAAYFQELTMYRG). 4 disordered regions span residues 85–164 (EPGK…VSPE), 244–271 (DLGS…QEPP), 330–354 (NEQS…TTSG), and 426–493 (IVSD…STAE). The segment covering 90–100 (SVESKVPTQME) has biased composition (polar residues). The span at 101-117 (KSTDTDEDNVTRTEYSD) shows a compositional bias: basic and acidic residues. Residues 141-152 (SSKPATPKTTTP) show a composition bias toward low complexity. Thr-151 carries the phosphothreonine modification. Ser-155 is modified (phosphoserine). Polar residues-rich tracts occupy residues 426–442 (IVSD…NSVP) and 461–470 (SGTSVKSSSG). A compositionally biased stretch (acidic residues) spans 484 to 493 (IEPEGESTAE).

As to quaternary structure, interacts with FSCB. Isoform 3 self-associates. Isoform 3 and isoform 5 interact with GSK3B. Isoform 1 does not interact with GSK3B. In terms of processing, isoform 1 is phosphorylated on tyrosine residues during in vitro capacitation. Isoform 3 and isoform 5 are phosphorylated by GSK3B in vitro. Dephosphorylation affects its ability to bind calcium. In terms of tissue distribution, expressed in elongating spermatids and spermatozoa (at protein level). Isoform 1 is expressed in testis. Isoform 3 and isoform 5 are also expressed in brain, pancreas and numerous brain tumors.

It is found in the cytoplasm. Its subcellular location is the cytoskeleton. It localises to the cell projection. The protein localises to the cilium. The protein resides in the flagellum. It is found in the nucleus. Functionally, may function as a regulator of both motility- and head-associated functions such as capacitation and the acrosome reaction. Isoform 1 binds calcium in vitro. Isoform 2 and isoform 6 probably bind calcium. Isoform 3 and isoform 5 do not bind calcium in vitro. Isoform 4 probably does not bind calcium. The polypeptide is Calcium-binding tyrosine phosphorylation-regulated protein (CABYR) (Homo sapiens (Human)).